We begin with the raw amino-acid sequence, 249 residues long: 1-(5-phosphoribosyl)-5-[(5-phosphoribosylamino)methylideneamino] imidazole-4-carboxamide isomerase (249 aa).

The active-site Proton acceptor is the aspartate 11. The active-site Proton donor is the aspartate 132.

It belongs to the HisA/HisF family.

It localises to the cytoplasm. The catalysed reaction is 1-(5-phospho-beta-D-ribosyl)-5-[(5-phospho-beta-D-ribosylamino)methylideneamino]imidazole-4-carboxamide = 5-[(5-phospho-1-deoxy-D-ribulos-1-ylimino)methylamino]-1-(5-phospho-beta-D-ribosyl)imidazole-4-carboxamide. The protein operates within amino-acid biosynthesis; L-histidine biosynthesis; L-histidine from 5-phospho-alpha-D-ribose 1-diphosphate: step 4/9. The chain is 1-(5-phosphoribosyl)-5-[(5-phosphoribosylamino)methylideneamino] imidazole-4-carboxamide isomerase from Nitrobacter winogradskyi (strain ATCC 25391 / DSM 10237 / CIP 104748 / NCIMB 11846 / Nb-255).